The following is a 382-amino-acid chain: Dual-specificity RNA methyltransferase RlmN (382 aa).

Residue E91 is the Proton acceptor of the active site. A Radical SAM core domain is found at 97–339 (ETDRGTLCIS…TTVRKTRGDD (243 aa)). C104 and C344 are oxidised to a cystine. [4Fe-4S] cluster contacts are provided by C111, C115, and C118. S-adenosyl-L-methionine contacts are provided by residues 165–166 (GE), S197, 219–221 (SLH), and N301. Residue C344 is the S-methylcysteine intermediate of the active site.

Belongs to the radical SAM superfamily. RlmN family. Requires [4Fe-4S] cluster as cofactor.

Its subcellular location is the cytoplasm. It catalyses the reaction adenosine(2503) in 23S rRNA + 2 reduced [2Fe-2S]-[ferredoxin] + 2 S-adenosyl-L-methionine = 2-methyladenosine(2503) in 23S rRNA + 5'-deoxyadenosine + L-methionine + 2 oxidized [2Fe-2S]-[ferredoxin] + S-adenosyl-L-homocysteine. It carries out the reaction adenosine(37) in tRNA + 2 reduced [2Fe-2S]-[ferredoxin] + 2 S-adenosyl-L-methionine = 2-methyladenosine(37) in tRNA + 5'-deoxyadenosine + L-methionine + 2 oxidized [2Fe-2S]-[ferredoxin] + S-adenosyl-L-homocysteine. Its function is as follows. Specifically methylates position 2 of adenine 2503 in 23S rRNA and position 2 of adenine 37 in tRNAs. m2A2503 modification seems to play a crucial role in the proofreading step occurring at the peptidyl transferase center and thus would serve to optimize ribosomal fidelity. The chain is Dual-specificity RNA methyltransferase RlmN from Polaromonas sp. (strain JS666 / ATCC BAA-500).